Consider the following 662-residue polypeptide: Polyunsaturated fatty acid (12S)/(13S)-lipoxygenase, epidermal-type (662 aa).

Residues 2-114 (VKYKILVATG…TICLTEGTAL (113 aa)) enclose the PLAT domain. The Lipoxygenase domain occupies 115–662 (KVTDDTQNLF…PSLVENSVTI (548 aa)). Fe cation-binding residues include H360, H365, H540, and I662.

This sequence belongs to the lipoxygenase family. Fe cation serves as cofactor. In terms of tissue distribution, expressed in epidermis.

It localises to the cytoplasm. It carries out the reaction (5Z,8Z,11Z,14Z)-eicosatetraenoate + O2 = (12S)-hydroperoxy-(5Z,8Z,10E,14Z)-eicosatetraenoate. It catalyses the reaction 1-O-methyl-(9Z,12Z)-octadecadienoate + O2 = 1-O-methyl-(13S)-hydroperoxy-(9Z,11E)-octadecadienoate. The catalysed reaction is (8Z,11Z,14Z)-eicosatrienoate + O2 = (12S)-hydroperoxy-(8Z,10E,14Z)-eicosatrienoate. The enzyme catalyses (5Z,8Z,11Z)-eicosatrienoate + O2 = (12S)-hydroperoxy-(5Z,8Z,10E)-eicosatrienoate. It carries out the reaction 1-O-methyl-(5Z,8Z,11Z,14Z)-eicosatetraenoate + O2 = 1-O-methyl-(12S)-hydroperoxy-(5Z,8Z,10E,14Z)-eicosatetraenoate. It catalyses the reaction (9Z,12Z)-octadecadienoate + O2 = (13S)-hydroperoxy-(9Z,11E)-octadecadienoate. The catalysed reaction is (4Z,7Z,10Z,13Z,16Z,19Z)-docosahexaenoate + O2 = (14S)-hydroperoxy-(4Z,7Z,10Z,12E,16Z,19Z)-docosahexaenoate. It functions in the pathway lipid metabolism; hydroperoxy eicosatetraenoic acid biosynthesis. With respect to regulation, arachidonate 12-lipoxygenase activity is decreased when the pH decreases from 7.4 to 6.0. Its function is as follows. Catalyzes the regio and stereo-specific incorporation of a single molecule of dioxygen into free and esterified polyunsaturated fatty acids generating lipid hydroperoxides that can be further reduced to the corresponding hydroxy species. Shows increasing catalytic activity within the series arachidonic acid &lt; 5,8,11-eicosatrienoic acid &lt; linoleic acid &lt; 8,11,14-eicosatrienoic acid. This is Polyunsaturated fatty acid (12S)/(13S)-lipoxygenase, epidermal-type from Mus musculus (Mouse).